The primary structure comprises 437 residues: Glutamate-1-semialdehyde 2,1-aminomutase (437 aa).

Position 277 is an N6-(pyridoxal phosphate)lysine (lysine 277).

The protein belongs to the class-III pyridoxal-phosphate-dependent aminotransferase family. HemL subfamily. Homodimer. Pyridoxal 5'-phosphate serves as cofactor.

It localises to the cytoplasm. It carries out the reaction (S)-4-amino-5-oxopentanoate = 5-aminolevulinate. Its pathway is porphyrin-containing compound metabolism; protoporphyrin-IX biosynthesis; 5-aminolevulinate from L-glutamyl-tRNA(Glu): step 2/2. It functions in the pathway porphyrin-containing compound metabolism; chlorophyll biosynthesis. In Thermosynechococcus vestitus (strain NIES-2133 / IAM M-273 / BP-1), this protein is Glutamate-1-semialdehyde 2,1-aminomutase.